We begin with the raw amino-acid sequence, 122 residues long: Large ribosomal subunit protein uL14 (122 aa).

It belongs to the universal ribosomal protein uL14 family. In terms of assembly, part of the 50S ribosomal subunit. Forms a cluster with proteins L3 and L19. In the 70S ribosome, L14 and L19 interact and together make contacts with the 16S rRNA in bridges B5 and B8.

Binds to 23S rRNA. Forms part of two intersubunit bridges in the 70S ribosome. In Coxiella burnetii (strain RSA 331 / Henzerling II), this protein is Large ribosomal subunit protein uL14.